Consider the following 136-residue polypeptide: Nucleoside diphosphate kinase (136 aa).

6 residues coordinate ATP: Lys10, Phe58, Arg86, Thr92, Arg104, and Asn114. Residue His117 is the Pros-phosphohistidine intermediate of the active site.

The protein belongs to the NDK family. In terms of assembly, homotetramer. Requires Mg(2+) as cofactor.

The protein localises to the cytoplasm. It carries out the reaction a 2'-deoxyribonucleoside 5'-diphosphate + ATP = a 2'-deoxyribonucleoside 5'-triphosphate + ADP. It catalyses the reaction a ribonucleoside 5'-diphosphate + ATP = a ribonucleoside 5'-triphosphate + ADP. Major role in the synthesis of nucleoside triphosphates other than ATP. The ATP gamma phosphate is transferred to the NDP beta phosphate via a ping-pong mechanism, using a phosphorylated active-site intermediate. This is Nucleoside diphosphate kinase from Mycolicibacterium paratuberculosis (strain ATCC BAA-968 / K-10) (Mycobacterium paratuberculosis).